We begin with the raw amino-acid sequence, 73 residues long: DNA-directed RNA polymerase subunit omega (73 aa).

It belongs to the RNA polymerase subunit omega family. As to quaternary structure, the RNAP catalytic core consists of 2 alpha, 1 beta, 1 beta' and 1 omega subunit. When a sigma factor is associated with the core the holoenzyme is formed, which can initiate transcription.

It catalyses the reaction RNA(n) + a ribonucleoside 5'-triphosphate = RNA(n+1) + diphosphate. In terms of biological role, promotes RNA polymerase assembly. Latches the N- and C-terminal regions of the beta' subunit thereby facilitating its interaction with the beta and alpha subunits. This is DNA-directed RNA polymerase subunit omega from Clostridium novyi (strain NT).